The chain runs to 104 residues: Large ribosomal subunit protein uL24 (104 aa).

Positions 41–61 (ISKKHKKPTPNEKQSGGIFEK) are disordered.

It belongs to the universal ribosomal protein uL24 family. Part of the 50S ribosomal subunit.

In terms of biological role, one of two assembly initiator proteins, it binds directly to the 5'-end of the 23S rRNA, where it nucleates assembly of the 50S subunit. Its function is as follows. One of the proteins that surrounds the polypeptide exit tunnel on the outside of the subunit. This is Large ribosomal subunit protein uL24 from Wigglesworthia glossinidia brevipalpis.